The following is a 374-amino-acid chain: Pectate lyase 2 (374 aa).

An N-terminal signal peptide occupies residues 1–22 (MKYLLPTAATGLLLLAAQPAVA). An intrachain disulfide couples Cys-93 to Cys-176. Positions 150, 152, 187, and 191 each coordinate Ca(2+). Residue Arg-239 is part of the active site. Cysteines 350 and 373 form a disulfide.

This sequence belongs to the polysaccharide lyase 1 family. PLADES subfamily. Requires Ca(2+) as cofactor.

Its subcellular location is the secreted. The enzyme catalyses Eliminative cleavage of (1-&gt;4)-alpha-D-galacturonan to give oligosaccharides with 4-deoxy-alpha-D-galact-4-enuronosyl groups at their non-reducing ends.. It functions in the pathway glycan metabolism; pectin degradation; 2-dehydro-3-deoxy-D-gluconate from pectin: step 2/5. Its function is as follows. Involved in maceration and soft-rotting of plant tissue. The protein is Pectate lyase 2 (pel2) of Pectobacterium atrosepticum (strain SCRI 1043 / ATCC BAA-672) (Erwinia carotovora subsp. atroseptica).